The chain runs to 206 residues: dCTP deaminase, dUMP-forming (206 aa).

Residues 117-122 (RSSFGR), Asp-135, 143-145 (TLE), Gln-163, Tyr-177, Lys-184, and Gln-188 contribute to the dCTP site. The active-site Proton donor/acceptor is Glu-145.

It belongs to the dCTP deaminase family. As to quaternary structure, homotrimer.

The enzyme catalyses dCTP + 2 H2O = dUMP + NH4(+) + diphosphate. It functions in the pathway pyrimidine metabolism; dUMP biosynthesis; dUMP from dCTP: step 1/1. Bifunctional enzyme that catalyzes both the deamination of dCTP to dUTP and the hydrolysis of dUTP to dUMP without releasing the toxic dUTP intermediate. The polypeptide is dCTP deaminase, dUMP-forming (Methanococcus maripaludis (strain DSM 14266 / JCM 13030 / NBRC 101832 / S2 / LL)).